A 128-amino-acid chain; its full sequence is Azurin (128 aa).

Positions 1–128 (AECKTTIDST…SMMKGTVTLK (128 aa)) constitute a Plastocyanin-like domain. Cysteine 3 and cysteine 26 are oxidised to a cystine. Cu cation contacts are provided by histidine 46, cysteine 112, histidine 117, and methionine 121.

It is found in the periplasm. Transfers electrons from cytochrome c551 to cytochrome oxidase. The polypeptide is Azurin (Pseudomonas fluorescens biotype B).